Reading from the N-terminus, the 554-residue chain is Movement protein Hsp70h (554 aa).

The protein belongs to the heat shock protein 70 family.

It localises to the virion. Its function is as follows. Transports viral genome to neighboring plant cells directly through plasmosdesmata, without any budding. The movement protein allows efficient cell to cell propagation, by bypassing the host cell wall barrier. Two movement proteins, p6, Hsp70h and three structural proteins, CP, CPm, and P64 are essential for cell-cell movement. Also plays a role in virion formation. Together with CPm and p64, encapsidates the 5'-terminal portion of the viral genome. The protein is Movement protein Hsp70h of Lettuce infectious yellows virus (isolate United States/92) (LIYV).